The chain runs to 431 residues: tRNA(Ile)-lysidine synthase (431 aa).

19–24 (STGIDS) provides a ligand contact to ATP.

Belongs to the tRNA(Ile)-lysidine synthase family.

The protein resides in the cytoplasm. It carries out the reaction cytidine(34) in tRNA(Ile2) + L-lysine + ATP = lysidine(34) in tRNA(Ile2) + AMP + diphosphate + H(+). Ligates lysine onto the cytidine present at position 34 of the AUA codon-specific tRNA(Ile) that contains the anticodon CAU, in an ATP-dependent manner. Cytidine is converted to lysidine, thus changing the amino acid specificity of the tRNA from methionine to isoleucine. This Staphylococcus aureus (strain Mu50 / ATCC 700699) protein is tRNA(Ile)-lysidine synthase.